The primary structure comprises 156 residues: Small ribosomal subunit protein uS7 (156 aa).

This sequence belongs to the universal ribosomal protein uS7 family. As to quaternary structure, part of the 30S ribosomal subunit. Contacts proteins S9 and S11.

In terms of biological role, one of the primary rRNA binding proteins, it binds directly to 16S rRNA where it nucleates assembly of the head domain of the 30S subunit. Is located at the subunit interface close to the decoding center, probably blocks exit of the E-site tRNA. In Pseudoalteromonas translucida (strain TAC 125), this protein is Small ribosomal subunit protein uS7.